The sequence spans 102 residues: Large ribosomal subunit protein bL21 (102 aa).

Belongs to the bacterial ribosomal protein bL21 family. In terms of assembly, part of the 50S ribosomal subunit. Contacts protein L20.

Its function is as follows. This protein binds to 23S rRNA in the presence of protein L20. The protein is Large ribosomal subunit protein bL21 of Myxococcus xanthus (strain DK1622).